Here is a 353-residue protein sequence, read N- to C-terminus: 3-isopropylmalate dehydrogenase (353 aa).

73 to 86 (GPQYDTLDRPLRPE) is an NAD(+) binding site. 4 residues coordinate substrate: Arg93, Arg103, Arg131, and Asp220. Mg(2+) is bound by residues Asp220, Asp244, and Asp248. 278-290 (GSAPDIAGKNLAN) contacts NAD(+).

This sequence belongs to the isocitrate and isopropylmalate dehydrogenases family. LeuB type 1 subfamily. Homodimer. Requires Mg(2+) as cofactor. It depends on Mn(2+) as a cofactor.

Its subcellular location is the cytoplasm. The catalysed reaction is (2R,3S)-3-isopropylmalate + NAD(+) = 4-methyl-2-oxopentanoate + CO2 + NADH. Its pathway is amino-acid biosynthesis; L-leucine biosynthesis; L-leucine from 3-methyl-2-oxobutanoate: step 3/4. Catalyzes the oxidation of 3-carboxy-2-hydroxy-4-methylpentanoate (3-isopropylmalate) to 3-carboxy-4-methyl-2-oxopentanoate. The product decarboxylates to 4-methyl-2 oxopentanoate. The polypeptide is 3-isopropylmalate dehydrogenase (Thiobacillus denitrificans (strain ATCC 25259 / T1)).